Consider the following 397-residue polypeptide: Enoyl-[acyl-carrier-protein] reductase [NADH] (397 aa).

NAD(+)-binding positions include 48–53 (GASTGY), 74–75 (FE), 111–112 (DA), and 139–140 (LA). Y225 is a binding site for substrate. Y235 functions as the Proton donor in the catalytic mechanism. NAD(+) is bound by residues K244 and 273 to 275 (VVT).

It belongs to the TER reductase family. As to quaternary structure, monomer.

The enzyme catalyses a 2,3-saturated acyl-[ACP] + NAD(+) = a (2E)-enoyl-[ACP] + NADH + H(+). The protein operates within lipid metabolism; fatty acid biosynthesis. In terms of biological role, involved in the final reduction of the elongation cycle of fatty acid synthesis (FAS II). Catalyzes the reduction of a carbon-carbon double bond in an enoyl moiety that is covalently linked to an acyl carrier protein (ACP). The chain is Enoyl-[acyl-carrier-protein] reductase [NADH] from Edwardsiella ictaluri (strain 93-146).